Consider the following 538-residue polypeptide: Phosphoenolpyruvate carboxykinase (ATP) (538 aa).

Substrate-binding residues include arginine 64, tyrosine 205, and lysine 211. ATP is bound by residues lysine 211, histidine 230, and 246–254 (GLSGTGKTT). Positions 211 and 230 each coordinate Mn(2+). Mn(2+) is bound at residue aspartate 267. ATP contacts are provided by residues glutamate 295, arginine 331, 447–448 (RI), and threonine 453. Arginine 331 is a binding site for substrate.

It belongs to the phosphoenolpyruvate carboxykinase (ATP) family. In terms of assembly, monomer. It depends on Mn(2+) as a cofactor.

It localises to the cytoplasm. The enzyme catalyses oxaloacetate + ATP = phosphoenolpyruvate + ADP + CO2. The protein operates within carbohydrate biosynthesis; gluconeogenesis. Involved in the gluconeogenesis. Catalyzes the conversion of oxaloacetate (OAA) to phosphoenolpyruvate (PEP) through direct phosphoryl transfer between the nucleoside triphosphate and OAA. The protein is Phosphoenolpyruvate carboxykinase (ATP) of Haemophilus influenzae (strain PittGG).